Here is a 357-residue protein sequence, read N- to C-terminus: ATP-dependent 6-phosphofructokinase 2 (357 aa).

ATP-binding positions include Gly12, 80–81 (KG), and 107–110 (GDGS). Asp108 provides a ligand contact to Mg(2+). Residues 131 to 133 (TID), Arg168, 175 to 177 (MGR), Glu229, Arg272, and 278 to 281 (HIQR) each bind substrate. Asp133 serves as the catalytic Proton acceptor.

It belongs to the phosphofructokinase type A (PFKA) family. Mixed-substrate PFK group III subfamily. In terms of assembly, homodimer or homotetramer. Requires Mg(2+) as cofactor.

Its subcellular location is the cytoplasm. The catalysed reaction is beta-D-fructose 6-phosphate + ATP = beta-D-fructose 1,6-bisphosphate + ADP + H(+). Its pathway is carbohydrate degradation; glycolysis; D-glyceraldehyde 3-phosphate and glycerone phosphate from D-glucose: step 3/4. With respect to regulation, subject to allosteric activation by ADP and other diphosphonucleosides, and inhibition by phosphoenolpyruvate. Its function is as follows. Catalyzes the phosphorylation of D-fructose 6-phosphate to fructose 1,6-bisphosphate by ATP, the first committing step of glycolysis. The polypeptide is ATP-dependent 6-phosphofructokinase 2 (Nostoc sp. (strain PCC 7120 / SAG 25.82 / UTEX 2576)).